We begin with the raw amino-acid sequence, 189 residues long: GTP cyclohydrolase 1 (189 aa).

3 residues coordinate Zn(2+): Cys-79, His-82, and Cys-150.

Belongs to the GTP cyclohydrolase I family. Homomer.

The enzyme catalyses GTP + H2O = 7,8-dihydroneopterin 3'-triphosphate + formate + H(+). Its pathway is cofactor biosynthesis; 7,8-dihydroneopterin triphosphate biosynthesis; 7,8-dihydroneopterin triphosphate from GTP: step 1/1. The protein is GTP cyclohydrolase 1 of Rickettsia rickettsii (strain Iowa).